The following is a 191-amino-acid chain: UPF0149 protein VCM66_2399 (191 aa).

It belongs to the UPF0149 family.

The polypeptide is UPF0149 protein VCM66_2399 (Vibrio cholerae serotype O1 (strain M66-2)).